A 238-amino-acid chain; its full sequence is Ribonuclease PH (238 aa).

Residues R86 and 124 to 126 (GTR) contribute to the phosphate site.

Belongs to the RNase PH family. Homohexameric ring arranged as a trimer of dimers.

The enzyme catalyses tRNA(n+1) + phosphate = tRNA(n) + a ribonucleoside 5'-diphosphate. Functionally, phosphorolytic 3'-5' exoribonuclease that plays an important role in tRNA 3'-end maturation. Removes nucleotide residues following the 3'-CCA terminus of tRNAs; can also add nucleotides to the ends of RNA molecules by using nucleoside diphosphates as substrates, but this may not be physiologically important. Probably plays a role in initiation of 16S rRNA degradation (leading to ribosome degradation) during starvation. This chain is Ribonuclease PH, found in Chelativorans sp. (strain BNC1).